The sequence spans 318 residues: NADH-ubiquinone oxidoreductase chain 1 (318 aa).

8 helical membrane passes run 2 to 22, 69 to 89, 102 to 122, 146 to 166, 171 to 191, 222 to 242, 253 to 273, and 294 to 314; these read FLIN…FLTL, FLFT…WAPL, LLFI…SGWA, MTTI…TAFA, HLWL…STLA, LFFM…VILF, EIST…FLWV, and LPLT…LACI.

This sequence belongs to the complex I subunit 1 family.

It localises to the mitochondrion inner membrane. It carries out the reaction a ubiquinone + NADH + 5 H(+)(in) = a ubiquinol + NAD(+) + 4 H(+)(out). Functionally, core subunit of the mitochondrial membrane respiratory chain NADH dehydrogenase (Complex I) that is believed to belong to the minimal assembly required for catalysis. Complex I functions in the transfer of electrons from NADH to the respiratory chain. The immediate electron acceptor for the enzyme is believed to be ubiquinone. This chain is NADH-ubiquinone oxidoreductase chain 1 (MT-ND1), found in Mammuthus primigenius (Siberian woolly mammoth).